The chain runs to 351 residues: Biotin synthase (351 aa).

Residues 44–262 (NRVQVSTLLS…LAVARILMPQ (219 aa)) enclose the Radical SAM core domain. 3 residues coordinate [4Fe-4S] cluster: cysteine 59, cysteine 63, and cysteine 66. 4 residues coordinate [2Fe-2S] cluster: cysteine 103, cysteine 134, cysteine 194, and arginine 266.

This sequence belongs to the radical SAM superfamily. Biotin synthase family. As to quaternary structure, homodimer. [4Fe-4S] cluster serves as cofactor. [2Fe-2S] cluster is required as a cofactor.

The enzyme catalyses (4R,5S)-dethiobiotin + (sulfur carrier)-SH + 2 reduced [2Fe-2S]-[ferredoxin] + 2 S-adenosyl-L-methionine = (sulfur carrier)-H + biotin + 2 5'-deoxyadenosine + 2 L-methionine + 2 oxidized [2Fe-2S]-[ferredoxin]. Its pathway is cofactor biosynthesis; biotin biosynthesis; biotin from 7,8-diaminononanoate: step 2/2. Its function is as follows. Catalyzes the conversion of dethiobiotin (DTB) to biotin by the insertion of a sulfur atom into dethiobiotin via a radical-based mechanism. This is Biotin synthase from Pseudomonas fluorescens (strain ATCC BAA-477 / NRRL B-23932 / Pf-5).